The chain runs to 367 residues: MNLADKVLVVNDNLPIRTDKPVHSGKVRSVYWLTPEDSARLIKDKGYDVPADAPLAIMVISDRISAFDCVWQGENGLNGVPGKGTALNAISNHWFKLFKEKGLADSHILDIPHPLVWIVQKARPVMIEAIARQYITGSMWRSYTKGEREFCGITIPEGLEKDQKLPELLITPSTKGVLTGLEGVPEADDVNVSRSDIERHVDGFNFSSLSDIDLYEKLLKEGFDVISDALAEHDQIFVDTKFEFGYVNDAAGNEKLIYMDEVGTPDSSRIWDGSSHRDGKIIEQSKEGFRQWLLNHFPDADILLNKNRMEERFALAKDNKLPESVMMDISNTYVGIAEKVIGEKLHISENPKQEIIDILRSEYQLIV.

The protein belongs to the SAICAR synthetase family.

It carries out the reaction 5-amino-1-(5-phospho-D-ribosyl)imidazole-4-carboxylate + L-aspartate + ATP = (2S)-2-[5-amino-1-(5-phospho-beta-D-ribosyl)imidazole-4-carboxamido]succinate + ADP + phosphate + 2 H(+). The protein operates within purine metabolism; IMP biosynthesis via de novo pathway; 5-amino-1-(5-phospho-D-ribosyl)imidazole-4-carboxamide from 5-amino-1-(5-phospho-D-ribosyl)imidazole-4-carboxylate: step 1/2. This Shewanella piezotolerans (strain WP3 / JCM 13877) protein is Phosphoribosylaminoimidazole-succinocarboxamide synthase.